The chain runs to 391 residues: MATAAAASLQYALHGAASASAKPRSAAPGRSVRVVAARRSVRARGGAVVARAAVTASADATAESKSGGHEVLLFEALREALIEEMKEDPTVCVFGEDVGHYGGSYKVTKGLAEMFGDLRVLDTPIAENSFAGMGVGAAMKGLRPIVEGMNMGFLLLAYNQISNNCGMLHYTSGGQFKIPIVIRGPGGVGRQLGAEHSQRLESYFQSIPGLQMVACSTPYNAKGLMKAAIRSENPVVLFEHVLLYNLKEKIPDEEYICCLEEAEMVRPGEHVTILTYSRMRYHVMQAAKTLVNKGYDPEVIDIRSLKPFDLHTIGNSIKKTHRVLIVEECMRTGGIGASLRSAIIDNFWDYLDAPIMCLSSQDVPTPYAATLEDATVVQPAQIVAAVEQICQ.

A chloroplast-targeting transit peptide spans 1–35 (MATAAAASLQYALHGAASASAKPRSAAPGRSVRVV). A thiamine diphosphate-binding site is contributed by Glu127. K(+)-binding residues include Ile180, Ala228, Ile229, and Asn233.

Tetramer of 2 alpha and 2 beta subunits. The cofactor is thiamine diphosphate.

Its subcellular location is the plastid. The protein resides in the chloroplast. It carries out the reaction N(6)-[(R)-lipoyl]-L-lysyl-[protein] + pyruvate + H(+) = N(6)-[(R)-S(8)-acetyldihydrolipoyl]-L-lysyl-[protein] + CO2. The pyruvate dehydrogenase complex catalyzes the overall conversion of pyruvate to acetyl-CoA and CO(2). It contains multiple copies of three enzymatic components: pyruvate dehydrogenase (E1), dihydrolipoamide acetyltransferase (E2) and lipoamide dehydrogenase (E3). This is Pyruvate dehydrogenase E1 component subunit beta-3, chloroplastic from Oryza sativa subsp. japonica (Rice).